The sequence spans 475 residues: MSPKTETKASAGFKAGVKDYRLTYYTPDYETLATDILAAFRVTPQPGVPPEEAGAAVAAESSTGTWTTVWTDGLTSLDRYKGRCYHIEPVAGEENQYIAYVAYPLDLFEEGSVTNMFTSIVGNVFGFKALRALRLEDLRIPPAYSKSFQGPPHGIQVERDKLNKYGRPLLGCTIKPKLGLSAKNYGRAVYECLRGGLDFTKDDENVNSQPFMRWRDRFLFCAEALYKAQAETGEIKGHYLNATAGTCEEMMKRAVFARELGVPIVMHDYLTGGFTANTSLAHYCRDNGLLLHIHRAMHAVIDRQRNHGIHFRVLAKALRMSGGDHIHAGTVVGKLEGERDVTLGFVDLLRDDFIEKDRSRGIYFTQDWVSMPGVLPVASGGIHVWHMPALTEIFGDDSVLQFGGGTLGHPWGNAPGAVANRVALEACVQARNEGRDLAREGNEVIREASRWSPELAAACEVWKEIKFEFEAMDVL.

Residues 1–2 (MS) constitute a propeptide that is removed on maturation. Residue Pro-3 is modified to N-acetylproline. Lys-14 carries the N6,N6,N6-trimethyllysine modification. Residues Asn-123 and Thr-173 each coordinate substrate. The Proton acceptor role is filled by Lys-175. A substrate-binding site is contributed by Lys-177. Positions 201, 203, and 204 each coordinate Mg(2+). Residue Lys-201 is modified to N6-carboxylysine. His-294 (proton acceptor) is an active-site residue. The substrate site is built by Arg-295, His-327, and Ser-379.

Belongs to the RuBisCO large chain family. Type I subfamily. Heterohexadecamer of 8 large chains and 8 small chains; disulfide-linked. The disulfide link is formed within the large subunit homodimers. Mg(2+) serves as cofactor. Post-translationally, the disulfide bond which can form in the large chain dimeric partners within the hexadecamer appears to be associated with oxidative stress and protein turnover.

It is found in the plastid. The protein localises to the chloroplast. The enzyme catalyses 2 (2R)-3-phosphoglycerate + 2 H(+) = D-ribulose 1,5-bisphosphate + CO2 + H2O. It catalyses the reaction D-ribulose 1,5-bisphosphate + O2 = 2-phosphoglycolate + (2R)-3-phosphoglycerate + 2 H(+). Its function is as follows. RuBisCO catalyzes two reactions: the carboxylation of D-ribulose 1,5-bisphosphate, the primary event in carbon dioxide fixation, as well as the oxidative fragmentation of the pentose substrate in the photorespiration process. Both reactions occur simultaneously and in competition at the same active site. The sequence is that of Ribulose bisphosphate carboxylase large chain from Amborella trichopoda.